The following is a 425-amino-acid chain: Histidine--tRNA ligase (425 aa).

The protein belongs to the class-II aminoacyl-tRNA synthetase family. As to quaternary structure, homodimer.

Its subcellular location is the cytoplasm. It carries out the reaction tRNA(His) + L-histidine + ATP = L-histidyl-tRNA(His) + AMP + diphosphate + H(+). The polypeptide is Histidine--tRNA ligase (Shewanella sp. (strain MR-4)).